Reading from the N-terminus, the 362-residue chain is Epoxide hydrolase 4 (362 aa).

A helical; Signal-anchor for type II membrane protein membrane pass occupies residues 17–37 (SLLFWSLVYCYCGLCASIHLL). In terms of domain architecture, AB hydrolase-1 spans 94-211 (PLMLLLHGFP…EYILRHPAQL (118 aa)). Residue Asp-169 is the Nucleophile of the active site. The active-site Proton donor is Tyr-281. Residue His-336 is the Proton acceptor of the active site.

Belongs to the AB hydrolase superfamily. Epoxide hydrolase family.

The protein resides in the membrane. The protein is Epoxide hydrolase 4 (EPHX4) of Homo sapiens (Human).